We begin with the raw amino-acid sequence, 208 residues long: Small ribosomal subunit protein uS4 (208 aa).

One can recognise an S4 RNA-binding domain in the interval 98–161; sequence RRLDNVVYRL…KASPRIKELV (64 aa).

Belongs to the universal ribosomal protein uS4 family. As to quaternary structure, part of the 30S ribosomal subunit. Contacts protein S5. The interaction surface between S4 and S5 is involved in control of translational fidelity.

One of the primary rRNA binding proteins, it binds directly to 16S rRNA where it nucleates assembly of the body of the 30S subunit. Functionally, with S5 and S12 plays an important role in translational accuracy. The polypeptide is Small ribosomal subunit protein uS4 (Desulforamulus reducens (strain ATCC BAA-1160 / DSM 100696 / MI-1) (Desulfotomaculum reducens)).